The sequence spans 154 residues: Myoglobin (154 aa).

The Globin domain maps to 2 to 148 (GLSDGEWQLV…FRNDIAAKYK (147 aa)). At S4 the chain carries Phosphoserine. Residue H65 participates in nitrite binding. O2 is bound at residue H65. Residue T68 is modified to Phosphothreonine. H94 lines the heme b pocket.

It belongs to the globin family. Monomeric.

The protein localises to the cytoplasm. It is found in the sarcoplasm. It carries out the reaction Fe(III)-heme b-[protein] + nitric oxide + H2O = Fe(II)-heme b-[protein] + nitrite + 2 H(+). The catalysed reaction is H2O2 + AH2 = A + 2 H2O. Functionally, monomeric heme protein which primary function is to store oxygen and facilitate its diffusion within muscle tissues. Reversibly binds oxygen through a pentacoordinated heme iron and enables its timely and efficient release as needed during periods of heightened demand. Depending on the oxidative conditions of tissues and cells, and in addition to its ability to bind oxygen, it also has a nitrite reductase activity whereby it regulates the production of bioactive nitric oxide. Under stress conditions, like hypoxia and anoxia, it also protects cells against reactive oxygen species thanks to its pseudoperoxidase activity. The polypeptide is Myoglobin (MB) (Lagostomus maximus (Plains viscacha)).